Here is a 397-residue protein sequence, read N- to C-terminus: Lysophospholipid transporter LplT (397 aa).

The Periplasmic segment spans residues 1–17 (MSESVHTNTSLWSKGMK). The helical transmembrane segment at 18–38 (AVIVAQFLSAFGDNALLFATL) threads the bilayer. The Cytoplasmic portion of the chain corresponds to 39-52 (ALLKAQFYPEWSQP). Residues 53-73 (ILQMVFVGAYILFAPFVGQVA) form a helical membrane-spanning segment. The Periplasmic portion of the chain corresponds to 74–90 (DSFAKGRVMMFANGLKL). Residues 91–111 (LGAASICFGINPFLGYTLVGV) form a helical membrane-spanning segment. Residues 112–144 (GAAAYSPAKYGILGELTTGSKLVKANGLMEAST) are Cytoplasmic-facing. Residues 145–165 (IAAILLGSVAGGVLADWHVLV) form a helical membrane-spanning segment. Residue Ala-166 is a topological domain, periplasmic. The chain crosses the membrane as a helical span at residues 167 to 187 (LAACALAYGGAVVANIYIPKL). Topologically, residues 188–226 (AAARPGQSWNLINMTRSFLNACTSLWRNGETRFSLVGTS) are cytoplasmic. The helical transmembrane segment at 227 to 247 (LFWGAGVTLRFLLVLWVPVAL) threads the bilayer. Residues 248-256 (GITDNATPT) lie on the Periplasmic side of the membrane. A helical transmembrane segment spans residues 257–277 (YLNAMVAIGIVVGAGAAAKLV). Topologically, residues 278–280 (TLE) are cytoplasmic. Residues 281–301 (TVSRCMPAGILIGVVVLIFSL) form a helical membrane-spanning segment. Over 302–304 (QHE) the chain is Periplasmic. Residues 305-325 (LLPAYALLMLIGVLGGFFVVP) form a helical membrane-spanning segment. The Cytoplasmic segment spans residues 326–343 (LNALLQERGKKSVGAGNA). Residues 344–364 (IAVQNLGENSAMLLMLGIYSL) traverse the membrane as a helical segment. At 365–366 (AV) the chain is on the periplasmic side. Residues 367–387 (MVGIPVVPIGIGFGALFALAI) traverse the membrane as a helical segment. Topologically, residues 388–397 (TALWIWQRRH) are cytoplasmic.

Belongs to the major facilitator superfamily. LplT (TC 2.A.1.42) family.

The protein resides in the cell inner membrane. Functionally, catalyzes the facilitated diffusion of 2-acyl-glycero-3-phosphoethanolamine (2-acyl-GPE) into the cell. The polypeptide is Lysophospholipid transporter LplT (Escherichia coli (strain SMS-3-5 / SECEC)).